The chain runs to 185 residues: Gastrokine-1 (185 aa).

A signal peptide spans 1 to 20 (MKFTIAFAGLLGVFLTPALA). The BRICHOS domain occupies 54-150 (NNGWNSWNAL…MCKGIPTYMA (97 aa)). Residues cysteine 81 and cysteine 142 are joined by a disulfide bond.

Belongs to the gastrokine family. Highly expressed specifically in surface cells of the antrum mucosa from where it is secreted.

It localises to the secreted. The protein localises to the cytoplasmic granule. Its subcellular location is the golgi apparatus. Its function is as follows. Has mitogenic activity and may be involved in maintaining the integrity of the gastric mucosal epithelium. The polypeptide is Gastrokine-1 (GKN1) (Sus scrofa (Pig)).